Here is a 105-residue protein sequence, read N- to C-terminus: Putative toxin MazF8 (105 aa).

As to quaternary structure, forms a complex with cognate antitoxin MazE8.

Putative toxic component of a type II toxin-antitoxin (TA) system. Acts as an endoribonuclease. Neutralized by coexpression with cognate antitoxin MazE8. This is Putative toxin MazF8 (mazF8) from Mycobacterium tuberculosis (strain CDC 1551 / Oshkosh).